The primary structure comprises 779 residues: FAD-dependent monooxygenase BOA8 (779 aa).

Glu-85, Arg-128, Asp-331, and Ala-344 together coordinate FAD. Helical transmembrane passes span 471 to 491, 504 to 524, 542 to 562, 587 to 607, 618 to 638, 665 to 685, and 742 to 762; these read AQLA…KTPE, VKLD…IWTI, AFLL…YFFF, ILPL…WSSI, NAWY…KFIV, ILIC…SIAF, and LILT…GLIV.

It belongs to the paxM FAD-dependent monooxygenase family. It depends on FAD as a cofactor.

Its subcellular location is the membrane. It participates in polyketide biosynthesis. Functionally, FAD-dependent monooxygenase; part of the gene cluster B that mediates the biosynthesis of botcinic acid and its botcinin derivatives, acetate-derived polyketides that contribute to virulence when combined with the sesquiterpene botrydial. Botcinic acid and its derivatives have been shown to induce chlorosis and necrosis during host plant infection, but also have antifungal activities. Two polyketide synthases, BOA6 and BOA9, are involved in the biosynthesis of botcinins. BOA6 mediates the formation of the per-methylated tetraketide core by condensation of four units of malonyl-CoA with one unit of acetyl-CoA, which would be methylated in activated methylene groups to yield a bicyclic acid intermediate that could then either be converted to botrylactone derivatives or lose the starter acetate unit through a retro-Claisen type C-C bond cleavage to yield botcinin derivatives. The second polyketide synthase, BOA9, is probably required for the biosynthesis of the tetraketide side chain of botcinins. The methyltransferase (MT) domain within BOA6 is probably responsible for the incorporation of four methyl groups. The trans-enoyl reductase BOA5 might take over the enoyl reductase function of BOA6 that misses an ER domain. The monooxygenases BOA2, BOA3 and BOA4 might be involved in further hydroxylations at C4, C5 and C8, whereas BOA7, close to BOA9, could potentially be involved in the hydroxylation at C4 in the side chain of botcinins. The sequence is that of FAD-dependent monooxygenase BOA8 from Botryotinia fuckeliana (strain B05.10) (Noble rot fungus).